A 544-amino-acid polypeptide reads, in one-letter code: Methionine--tRNA ligase 2 (544 aa).

Positions 10–20 (PYANGSLHLGH) match the 'HIGH' region motif. Zn(2+)-binding residues include cysteine 141, cysteine 144, cysteine 153, and cysteine 156. The short motif at 329-333 (KLSTS) is the 'KMSKS' region element. ATP is bound at residue threonine 332.

The protein belongs to the class-I aminoacyl-tRNA synthetase family. MetG type 1 subfamily. Monomer. Zn(2+) serves as cofactor.

It localises to the cytoplasm. It carries out the reaction tRNA(Met) + L-methionine + ATP = L-methionyl-tRNA(Met) + AMP + diphosphate. In terms of biological role, is required not only for elongation of protein synthesis but also for the initiation of all mRNA translation through initiator tRNA(fMet) aminoacylation. The chain is Methionine--tRNA ligase 2 from Bacillus anthracis.